Consider the following 700-residue polypeptide: Elongation factor G (700 aa).

One can recognise a tr-type G domain in the interval 10–286 (KKVRNIGIMA…AVIDYLPSPL (277 aa)). GTP-binding positions include 19–26 (AHIDAGKT), 83–87 (DTPGH), and 137–140 (NKMD).

Belongs to the TRAFAC class translation factor GTPase superfamily. Classic translation factor GTPase family. EF-G/EF-2 subfamily.

It localises to the cytoplasm. Catalyzes the GTP-dependent ribosomal translocation step during translation elongation. During this step, the ribosome changes from the pre-translocational (PRE) to the post-translocational (POST) state as the newly formed A-site-bound peptidyl-tRNA and P-site-bound deacylated tRNA move to the P and E sites, respectively. Catalyzes the coordinated movement of the two tRNA molecules, the mRNA and conformational changes in the ribosome. This chain is Elongation factor G, found in Nocardia farcinica (strain IFM 10152).